The chain runs to 431 residues: Argininosuccinate lyase (431 aa).

This sequence belongs to the lyase 1 family. Argininosuccinate lyase subfamily.

The protein resides in the cytoplasm. The catalysed reaction is 2-(N(omega)-L-arginino)succinate = fumarate + L-arginine. It participates in amino-acid biosynthesis; L-arginine biosynthesis; L-arginine from L-ornithine and carbamoyl phosphate: step 3/3. The polypeptide is Argininosuccinate lyase (Xanthomonas campestris pv. campestris (strain ATCC 33913 / DSM 3586 / NCPPB 528 / LMG 568 / P 25)).